Consider the following 413-residue polypeptide: Multifunctional CCA protein (413 aa).

ATP-binding residues include Gly8 and Arg11. Residues Gly8 and Arg11 each coordinate CTP. Asp21 and Asp23 together coordinate Mg(2+). ATP is bound by residues Arg91, Arg143, and Arg146. Residues Arg91, Arg143, and Arg146 each contribute to the CTP site. In terms of domain architecture, HD spans 232–333; the sequence is TGVHVMMVVD…VRLFERSDAL (102 aa).

This sequence belongs to the tRNA nucleotidyltransferase/poly(A) polymerase family. Bacterial CCA-adding enzyme type 1 subfamily. As to quaternary structure, monomer. Can also form homodimers and oligomers. Mg(2+) is required as a cofactor. Requires Ni(2+) as cofactor.

It catalyses the reaction a tRNA precursor + 2 CTP + ATP = a tRNA with a 3' CCA end + 3 diphosphate. The catalysed reaction is a tRNA with a 3' CCA end + 2 CTP + ATP = a tRNA with a 3' CCACCA end + 3 diphosphate. In terms of biological role, catalyzes the addition and repair of the essential 3'-terminal CCA sequence in tRNAs without using a nucleic acid template. Adds these three nucleotides in the order of C, C, and A to the tRNA nucleotide-73, using CTP and ATP as substrates and producing inorganic pyrophosphate. tRNA 3'-terminal CCA addition is required both for tRNA processing and repair. Also involved in tRNA surveillance by mediating tandem CCA addition to generate a CCACCA at the 3' terminus of unstable tRNAs. While stable tRNAs receive only 3'-terminal CCA, unstable tRNAs are marked with CCACCA and rapidly degraded. The chain is Multifunctional CCA protein from Burkholderia cenocepacia (strain HI2424).